Consider the following 80-residue polypeptide: RNA-binding protein Hfq (80 aa).

The region spanning 10–70 is the Sm domain; that stretch reads DIFLNNARKE…ISTVSPAKPI (61 aa).

This sequence belongs to the Hfq family. Homohexamer.

Its function is as follows. RNA chaperone that binds small regulatory RNA (sRNAs) and mRNAs to facilitate mRNA translational regulation in response to envelope stress, environmental stress and changes in metabolite concentrations. Also binds with high specificity to tRNAs. In Clostridium perfringens (strain SM101 / Type A), this protein is RNA-binding protein Hfq.